A 229-amino-acid polypeptide reads, in one-letter code: Heptaprenylglyceryl phosphate synthase (229 aa).

Lys-12 contributes to the sn-glycerol 1-phosphate binding site. Mg(2+)-binding residues include Asp-14 and Ser-40. Sn-glycerol 1-phosphate-binding positions include 159–164 (YLEYSG), Gly-189, and 209–210 (GN).

The protein belongs to the GGGP/HepGP synthase family. Group I subfamily. Homodimer. Mg(2+) is required as a cofactor.

It catalyses the reaction sn-glycerol 1-phosphate + all-trans-heptaprenyl diphosphate = 3-heptaprenyl-sn-glycero-1-phosphate + diphosphate. Its pathway is membrane lipid metabolism; glycerophospholipid metabolism. Its function is as follows. Prenyltransferase that catalyzes in vivo the transfer of the heptaprenyl moiety of heptaprenyl pyrophosphate (HepPP; 35 carbon atoms) to the C3 hydroxyl of sn-glycerol-1-phosphate (G1P), producing heptaprenylglyceryl phosphate (HepGP). This reaction is an ether-bond-formation step in the biosynthesis of archaea-type G1P-based membrane lipids found in Bacillales. The chain is Heptaprenylglyceryl phosphate synthase from Bacillus mycoides (strain KBAB4) (Bacillus weihenstephanensis).